Here is a 34-residue protein sequence, read N- to C-terminus: U4-theraphotoxin-Hs1a (34 aa).

Intrachain disulfides connect Cys-3–Cys-17, Cys-10–Cys-22, and Cys-16–Cys-33.

The protein belongs to the neurotoxin 14 (magi-1) family. 05 (ICK-7) subfamily. As to expression, expressed by the venom gland.

The protein resides in the secreted. Intracisternal injection paralyzes mice. The sequence is that of U4-theraphotoxin-Hs1a from Cyriopagopus schmidti (Chinese bird spider).